A 237-amino-acid polypeptide reads, in one-letter code: Large ribosomal subunit protein bL25 (237 aa).

Residues 1–104 (MELTAKPRTP…SVPVHTTGRS (104 aa)) form an N-terminal domain region. The middle domain stretch occupies residues 105–189 (QGEVQGGLVD…ELEAEVQAAQ (85 aa)). The tract at residues 190 to 237 (VAGLVAAGELSEEAAEAVLEGDASLEEVKAEASEDNAGTDSEDNSDAQ) is C-terminal domain. The tract at residues 205 to 237 (EAVLEGDASLEEVKAEASEDNAGTDSEDNSDAQ) is disordered.

It belongs to the bacterial ribosomal protein bL25 family. CTC subfamily. As to quaternary structure, part of the 50S ribosomal subunit. Contacts proteins L11 and L16, the A site tRNA, and the 5S and 23S rRNAs.

Functionally, this is one of 3 proteins that mediate the attachment of the 5S rRNA onto the large ribosomal subunit. This protein has three domains. The N-terminal one is bound on the solvent face, the middle domain fills the space between the 5S rRNA and the L11 arm contacting the 23S rRNA while the C-terminal domain is on the edge of the intersubunit interface and contacts the A site. The protein conformation changes upon binding of a tRNA mimic to the A site, although the mimic does not interact directly with CTC itself, consistent with CTCs presumed role in moderating A site binding. The chain is Large ribosomal subunit protein bL25 (rplY) from Deinococcus radiodurans (strain ATCC 13939 / DSM 20539 / JCM 16871 / CCUG 27074 / LMG 4051 / NBRC 15346 / NCIMB 9279 / VKM B-1422 / R1).